Here is a 288-residue protein sequence, read N- to C-terminus: MKNSPIGVFDSGVGGLTVARTIVDQAPTESIMYVGDTAHAPYGPKPREDIIRYSTAIADDLVARGAKMIVIACNTAASVFLDKARELYDVPVVGVIEPASRRAVAATRNGRVGVIGTTGTIASGAYQRCIANLDPNIEVHAVDCPQFVPFVERGITTGRQIMGLAEAYLEPLQDVGVDTVVLGCTHYPLLTGVIQLVMGDNVTLVSSSEEEGKEVPRVLYQEDLFNDANPEAESLDVVDANVVNDYAGPEPVRTFESTGDPHRFARLARRFLGPSITQVSHVEGLTDM.

Substrate contacts are provided by residues 10-11 and 42-43; these read DS and YG. Residue Cys-73 is the Proton donor/acceptor of the active site. Position 74–75 (74–75) interacts with substrate; the sequence is NT. The active-site Proton donor/acceptor is Cys-184. 185 to 186 contributes to the substrate binding site; sequence TH.

It belongs to the aspartate/glutamate racemases family.

The enzyme catalyses L-glutamate = D-glutamate. It participates in cell wall biogenesis; peptidoglycan biosynthesis. In terms of biological role, provides the (R)-glutamate required for cell wall biosynthesis. The polypeptide is Glutamate racemase (Corynebacterium kroppenstedtii (strain DSM 44385 / JCM 11950 / CIP 105744 / CCUG 35717)).